Here is a 230-residue protein sequence, read N- to C-terminus: Large ribosomal subunit protein uL4 (230 aa).

The interval 51–105 (RAAARQGTHSTKTRGDVSGGGRKPYRQKGTGRARQGSMRAPQFTGGGIVHGPKLR) is disordered.

It belongs to the universal ribosomal protein uL4 family. As to quaternary structure, part of the 50S ribosomal subunit.

Its function is as follows. One of the primary rRNA binding proteins, this protein initially binds near the 5'-end of the 23S rRNA. It is important during the early stages of 50S assembly. It makes multiple contacts with different domains of the 23S rRNA in the assembled 50S subunit and ribosome. Forms part of the polypeptide exit tunnel. This Mycobacterium leprae (strain Br4923) protein is Large ribosomal subunit protein uL4.